Here is a 534-residue protein sequence, read N- to C-terminus: Beta-glucosidase 31 (534 aa).

The first 22 residues, 1–22, serve as a signal peptide directing secretion; that stretch reads MAIKLIALVITLCVASWDVAQG. Gln-51 contacts a beta-D-glucoside. Asn-68 carries an N-linked (GlcNAc...) asparagine glycan. Residues His-154 and 199–200 contribute to the a beta-D-glucoside site; that span reads NE. Glu-200 serves as the catalytic Proton donor. The cysteines at positions 219 and 227 are disulfide-linked. Residue Tyr-344 coordinates a beta-D-glucoside. N-linked (GlcNAc...) asparagine glycosylation is present at Asn-374. A beta-D-glucoside is bound at residue Glu-417. The active-site Nucleophile is the Glu-417. Asn-425 carries an N-linked (GlcNAc...) asparagine glycan. Residues Trp-467, 474-475, and Phe-483 each bind a beta-D-glucoside; that span reads EW.

It belongs to the glycosyl hydrolase 1 family.

The catalysed reaction is Hydrolysis of terminal, non-reducing beta-D-glucosyl residues with release of beta-D-glucose.. The chain is Beta-glucosidase 31 from Arabidopsis thaliana (Mouse-ear cress).